A 194-amino-acid chain; its full sequence is MASMQHFSLAALLLAASICLGDADRTECQLPLDKGTPCTQEGGVKPSVAWWHDDKSGICLSFKYTGCGGNANRFTTIKNCEQHCKMPDRGACALGKKPAEDSNGEQLVCAGMREDKCPNGYQCKMMAFMGLCCPTKEEELFAREYEGVCKSGKPVKMDRGSGWMMTILGKSCDDQFCPEDAKCERGKLFANCCK.

Residues 1–23 (MASMQHFSLAALLLAASICLGDA) form the signal peptide. A BPTI/Kunitz inhibitor domain is found at 28–84 (CQLPLDKGTPCTQEGGVKPSVAWWHDDKSGICLSFKYTGCGGNANRFTTIKNCEQHC). Cystine bridges form between Cys28–Cys84, Cys38–Cys67, and Cys59–Cys80. Residues 90 to 134 (GACALGKKPAEDSNGEQLVCAGMREDKCPNGYQCKMMAFMGLCCP) form the WR1 domain.

Its subcellular location is the secreted. The polypeptide is Major allergen Ani s 1 (Anisakis simplex (Herring worm)).